The primary structure comprises 23 residues: Conolysin-Mt1 (23 aa).

Ser-22 is modified (serine amide).

As to expression, expressed by the venom duct.

The protein resides in the secreted. Functionally, this cytolytic peptide has ability to disrupt the integrity of cell membranes from both prokaryotes and eukaryotes. It permeabilizes both negatively charged prokaryotic (PE:PG) and zwitterionic eukaryotic (PC:cholesterol) model membranes. It has potent hemolytic activity on human erythrocytes and exhibits low antimicrobial activity against the Gram-negative bacterium E.coli (MIC&gt;50 uM) and the Gram-positive bacterium S.aureus (MIC=25-50 uM). Intracranial injection causes mice to shuffle backward until the encounter an obstacle, at which time the mouse jump into the air. The backward shuffle is reminiscent to the signature dance 'moonwalk' that gained widespread popularity after being performed by Michael Jackson. The chain is Conolysin-Mt1 from Conus mustelinus (Weasel cone).